The chain runs to 143 residues: Spliceosomal protein DIB1 (143 aa).

The residue at position 2 (Ala-2) is an N-acetylalanine.

The protein belongs to the DIM1 family. As to quaternary structure, component of the U4/U6-U5 tri-snRNP complex composed of the U4, U6 and U5 snRNAs and at least PRP3, PRP4, PRP6, PRP8, PRP18, PRP31, PRP38, SNU13, SNU23, SNU66, SNU114, SPP381, SMB1, SMD1, SMD2, SMD3, SMX2, SMX3, LSM2, LSM3, LSM4, LSM5, LSM6, LSM7, LSM8, BRR2 and DIB1.

The protein resides in the nucleus. Functionally, essential role in pre-mRNA splicing. Also essential for entry into mitosis (G2/M progression) as well as for chromosome segregation during mitosis. The sequence is that of Spliceosomal protein DIB1 (DIB1) from Saccharomyces cerevisiae (strain ATCC 204508 / S288c) (Baker's yeast).